The sequence spans 201 residues: Thioredoxin reductase-like selenoprotein T (201 aa).

A signal peptide spans 1-26 (MARSSGPLCLLLLGGLVAGILSGASA). A cross-link (cysteinyl-selenocysteine (Cys-Sec)) is located at residues 51-54 (CVSU). Position 54 (Sec54) is a non-standard amino acid, selenocysteine. A helical membrane pass occupies residues 96 to 116 (VFKLVLIGLIIAGKDPFAFFG).

The protein belongs to the SelWTH family. Selenoprotein T subfamily. Post-translationally, may contain a selenide-sulfide bond between Cys-51 and Sec-54. This bond is speculated to serve as redox-active pair.

The protein localises to the endoplasmic reticulum membrane. It catalyses the reaction [thioredoxin]-dithiol + NADP(+) = [thioredoxin]-disulfide + NADPH + H(+). In terms of biological role, selenoprotein with thioredoxin reductase-like oxidoreductase activity. The chain is Thioredoxin reductase-like selenoprotein T (selenot) from Xenopus tropicalis (Western clawed frog).